A 435-amino-acid chain; its full sequence is Adenylosuccinate synthetase (435 aa).

GTP-binding positions include 22–28 and 50–52; these read GDEGKGK and GHT. D23 acts as the Proton acceptor in catalysis. Mg(2+) is bound by residues D23 and G50. Residues 23–26, 48–51, T140, R154, Q235, T250, and R314 contribute to the IMP site; these read DEGK and NAGH. H51 (proton donor) is an active-site residue. Position 310 to 316 (310 to 316) interacts with substrate; the sequence is ATTGRKR. GTP contacts are provided by residues R316, 342 to 344, and 424 to 426; these read KLD and SVG.

Belongs to the adenylosuccinate synthetase family. Homodimer. It depends on Mg(2+) as a cofactor.

Its subcellular location is the cytoplasm. The enzyme catalyses IMP + L-aspartate + GTP = N(6)-(1,2-dicarboxyethyl)-AMP + GDP + phosphate + 2 H(+). It participates in purine metabolism; AMP biosynthesis via de novo pathway; AMP from IMP: step 1/2. Plays an important role in the de novo pathway of purine nucleotide biosynthesis. Catalyzes the first committed step in the biosynthesis of AMP from IMP. The polypeptide is Adenylosuccinate synthetase (Chlorobaculum tepidum (strain ATCC 49652 / DSM 12025 / NBRC 103806 / TLS) (Chlorobium tepidum)).